A 175-amino-acid polypeptide reads, in one-letter code: Large ribosomal subunit protein uL22y (175 aa).

The segment covering 153–163 has biased composition (basic and acidic residues); the sequence is EKEEPVKKEPE. The segment at 153 to 175 is disordered; that stretch reads EKEEPVKKEPETQLAAKSKKSAA.

The protein belongs to the universal ribosomal protein uL22 family.

The protein is Large ribosomal subunit protein uL22y (RPL17B) of Arabidopsis thaliana (Mouse-ear cress).